The primary structure comprises 337 residues: Transaldolase (337 aa).

The Nuclear localization signal signature appears at 1 to 10; it reads MSSSPVKRQR. Lys115 bears the N6-acetyllysine mark. The active-site Schiff-base intermediate with substrate is the Lys142. Lys219 carries the N6-acetyllysine modification. Residues Ser237 and Ser256 each carry the phosphoserine modification. 3 positions are modified to N6-acetyllysine: Lys269, Lys286, and Lys321.

Belongs to the transaldolase family. Type 1 subfamily. In terms of assembly, homodimer. Heterodimer with isoform 2. Interacts with KPNA1 and KPNA4.

The protein resides in the nucleus. Its subcellular location is the cytoplasm. The enzyme catalyses D-sedoheptulose 7-phosphate + D-glyceraldehyde 3-phosphate = D-erythrose 4-phosphate + beta-D-fructose 6-phosphate. The protein operates within carbohydrate degradation; pentose phosphate pathway; D-glyceraldehyde 3-phosphate and beta-D-fructose 6-phosphate from D-ribose 5-phosphate and D-xylulose 5-phosphate (non-oxidative stage): step 2/3. Catalyzes the rate-limiting step of the non-oxidative phase in the pentose phosphate pathway. Catalyzes the reversible conversion of sedheptulose-7-phosphate and D-glyceraldehyde 3-phosphate into erythrose-4-phosphate and beta-D-fructose 6-phosphate. Not only acts as a pentose phosphate pathway enzyme, but also affects other metabolite pathways by altering its subcellular localization between the nucleus and the cytoplasm. The chain is Transaldolase from Homo sapiens (Human).